The sequence spans 169 residues: Sorting nexin-24 (169 aa).

M1 carries the N-acetylmethionine modification. Residues 1-125 (MEVYIPSFRH…SFDETESEES (125 aa)) form the PX domain. The a 1,2-diacyl-sn-glycero-3-phospho-(1D-myo-inositol-3-phosphate) site is built by R38, S40, K61, and R74. Phosphoserine occurs at positions 113 and 116.

Belongs to the sorting nexin family.

The protein localises to the cytoplasmic vesicle membrane. Functionally, may be involved in several stages of intracellular trafficking. The sequence is that of Sorting nexin-24 (Snx24) from Rattus norvegicus (Rat).